Reading from the N-terminus, the 317-residue chain is UV DNA damage endonuclease (317 aa).

This sequence belongs to the uve1/UvsE family.

In terms of biological role, component in a DNA repair pathway. Removal of UV LIGHT damaged nucleotides. Recognizes pyrimidine dimers and cleave a phosphodiester bond immediately 5' to the lesion. The polypeptide is UV DNA damage endonuclease (Bacillus mycoides (strain KBAB4) (Bacillus weihenstephanensis)).